The chain runs to 382 residues: MSKSDYYDLLGLSKNATPEEIKKAYRKMALKYHPDKNPGDKAAEEKFKELSEAYDVLIDKDKRAAYDRYGHSAFSDGSGRGGFDFNSGFSTDFSDIFNDLFGGGFRGGRSSSKRQDGGTVGSDLRLDIEITLEDSFNGTKVPINYVTHVKCSSCSGSGSEGSVKSVQCNTCHGAGNTRTQQGFFTIERTCHVCNGEGEIIKNKCKKCSGSGRVRDEVNLLVTVPKGIESGDKIRLNGKGEAGYRGAQSGDLYVYPNIKKHKFFTRNGADLYCNVPIKMILATLGGHIEMPSIDGTWTKVKVPEGSQNGDKLRLKEKGMPVINSSRRGDMYIQITVETPINLTKQQKELLKKFDEEPNTVECNPQSTGFFQKVKSFWNDIRSS.

The 66-residue stretch at Asp-5 to Gly-70 folds into the J domain. The CR-type zinc-finger motif lies at Gly-138 to Glu-216. 8 residues coordinate Zn(2+): Cys-151, Cys-154, Cys-168, Cys-171, Cys-190, Cys-193, Cys-204, and Cys-207. CXXCXGXG motif repeat units lie at residues Cys-151–Gly-158, Cys-168–Gly-175, Cys-190–Gly-197, and Cys-204–Gly-211.

This sequence belongs to the DnaJ family. As to quaternary structure, homodimer. Requires Zn(2+) as cofactor.

The protein resides in the cytoplasm. In terms of biological role, participates actively in the response to hyperosmotic and heat shock by preventing the aggregation of stress-denatured proteins and by disaggregating proteins, also in an autonomous, DnaK-independent fashion. Unfolded proteins bind initially to DnaJ; upon interaction with the DnaJ-bound protein, DnaK hydrolyzes its bound ATP, resulting in the formation of a stable complex. GrpE releases ADP from DnaK; ATP binding to DnaK triggers the release of the substrate protein, thus completing the reaction cycle. Several rounds of ATP-dependent interactions between DnaJ, DnaK and GrpE are required for fully efficient folding. Also involved, together with DnaK and GrpE, in the DNA replication of plasmids through activation of initiation proteins. The chain is Chaperone protein DnaJ from Ehrlichia ruminantium (strain Gardel).